Here is a 290-residue protein sequence, read N- to C-terminus: Picrinine-N-methytransferase TMT4 (290 aa).

The SAM motif I stretch occupies residues 71–80 (MLDVGCGIGG). Positions 133 to 139 (DGTFDVV) match the Vacuolar targeting signal motif. An SAM motif II region spans residues 134–142 (GTFDVVFTI). Residues 161 to 170 (VAAPGAAIVI) form an SAM motif III region.

This sequence belongs to the class I-like SAM-binding methyltransferase superfamily. gTMT family. In terms of assembly, homodimer.

The protein resides in the vacuole membrane. It carries out the reaction picrinine + S-adenosyl-L-methionine = ervincine + S-adenosyl-L-homocysteine + H(+). The protein operates within alkaloid biosynthesis; vindoline biosynthesis. In terms of biological role, S-adenosyl-L-methionine-dependent N-methyltransferase involved in the biosynthesis of biologically active monoterpenoid indole alkaloids (MIAs) natural products including vindoline. Catalyzes the conversion of picrinine to N-methylpicrinine (ervincine). The chain is Picrinine-N-methytransferase TMT4 from Catharanthus roseus (Madagascar periwinkle).